Reading from the N-terminus, the 156-residue chain is Transcriptional repressor NrdR (156 aa).

A zinc finger lies at 3–34 (CPSCQFNGTRVVDSRPVDDNKEIRRRRECESC). The ATP-cone domain occupies 49–139 (LVVVKKEGSR…VYRQFKDINV (91 aa)).

It belongs to the NrdR family. Requires Zn(2+) as cofactor.

Functionally, negatively regulates transcription of bacterial ribonucleotide reductase nrd genes and operons by binding to NrdR-boxes. In Lysinibacillus sphaericus (strain C3-41), this protein is Transcriptional repressor NrdR.